The chain runs to 178 residues: Nucleoside-triphosphatase THEP1 (178 aa).

ATP-binding positions include 7–14 and 102–109; these read GEPGVGKT and VIIIDEIG.

It belongs to the THEP1 NTPase family. As to quaternary structure, monomer.

It carries out the reaction a ribonucleoside 5'-triphosphate + H2O = a ribonucleoside 5'-diphosphate + phosphate + H(+). Its function is as follows. Has nucleotide phosphatase activity towards ATP, GTP, CTP, TTP and UTP. May hydrolyze nucleoside diphosphates with lower efficiency. Does not have kinase activity. The chain is Nucleoside-triphosphatase THEP1 from Aquifex aeolicus (strain VF5).